The chain runs to 499 residues: ALBINO3-like protein 1, chloroplastic (499 aa).

The N-terminal 45 residues, 1 to 45, are a transit peptide targeting the chloroplast; the sequence is MSSTISLKPTHLILSSFSTGKVLQFRRSRFSHTPSSSSSRYRTLV. The next 4 membrane-spanning stretches (helical) occupy residues 115–135, 184–204, 263–283, and 302–322; these read LSTV…TVLV, LAGI…PVWI, LAYL…IQIM, and LLPL…SLYW. The tract at residues 378–499 is disordered; the sequence is LKIPREKGGE…QQHSHETEKR (122 aa). 3 stretches are compositionally biased toward basic and acidic residues: residues 379-420, 430-452, and 486-499; these read KIPR…RQKA, DKAH…KKTE, and HDTE…TEKR. Positions 397 to 436 form a coiled coil; that stretch reads GERFRLLKEQEAKRRREKEERQKAEAALSNQNTDKAHEQD.

It belongs to the OXA1/ALB3/YidC (TC 2.A.9.2) family. Homodimer. Interacts with ALB3. Interacts with STIC2. As to expression, highly expressed in green tissues.

The protein resides in the plastid. It is found in the chloroplast thylakoid membrane. Functionally, required for the insertion of some light harvesting chlorophyll-binding proteins (LHCP) into the chloroplast thylakoid membrane. Plays a role in the accumulation of some cytochrome b6f components in the thylakoid membrane. Required for the assembly and/or stability of the F(1)F(0) ATP synthase in chloroplast thylakoid membranes. Functions to stabilize or promote assembly of F(1) during its attachment to the membrane-embedded F(0) part. Participates with STIC2 in thylakoid protein targeting. May function with a specific subset of thylakoidal proteins. This is ALBINO3-like protein 1, chloroplastic from Arabidopsis thaliana (Mouse-ear cress).